A 328-amino-acid chain; its full sequence is Phosphate acyltransferase (328 aa).

This sequence belongs to the PlsX family. Homodimer. Probably interacts with PlsY.

The protein resides in the cytoplasm. It carries out the reaction a fatty acyl-[ACP] + phosphate = an acyl phosphate + holo-[ACP]. Its pathway is lipid metabolism; phospholipid metabolism. Catalyzes the reversible formation of acyl-phosphate (acyl-PO(4)) from acyl-[acyl-carrier-protein] (acyl-ACP). This enzyme utilizes acyl-ACP as fatty acyl donor, but not acyl-CoA. This chain is Phosphate acyltransferase, found in Staphylococcus aureus (strain MRSA252).